Reading from the N-terminus, the 497-residue chain is Glutamyl-tRNA(Gln) amidotransferase subunit A (497 aa).

Catalysis depends on charge relay system residues lysine 75 and serine 150. The active-site Acyl-ester intermediate is serine 174.

The protein belongs to the amidase family. GatA subfamily. As to quaternary structure, heterotrimer of A, B and C subunits.

It carries out the reaction L-glutamyl-tRNA(Gln) + L-glutamine + ATP + H2O = L-glutaminyl-tRNA(Gln) + L-glutamate + ADP + phosphate + H(+). Allows the formation of correctly charged Gln-tRNA(Gln) through the transamidation of misacylated Glu-tRNA(Gln) in organisms which lack glutaminyl-tRNA synthetase. The reaction takes place in the presence of glutamine and ATP through an activated gamma-phospho-Glu-tRNA(Gln). The protein is Glutamyl-tRNA(Gln) amidotransferase subunit A of Paraburkholderia phymatum (strain DSM 17167 / CIP 108236 / LMG 21445 / STM815) (Burkholderia phymatum).